The chain runs to 542 residues: Chaperonin GroEL (542 aa).

Residues 29 to 32, 86 to 90, glycine 413, 477 to 479, and aspartate 493 each bind ATP; these read TLGP, DGTTT, and NAA.

The protein belongs to the chaperonin (HSP60) family. As to quaternary structure, forms a cylinder of 14 subunits composed of two heptameric rings stacked back-to-back. Interacts with the co-chaperonin GroES.

The protein localises to the cytoplasm. It carries out the reaction ATP + H2O + a folded polypeptide = ADP + phosphate + an unfolded polypeptide.. Functionally, together with its co-chaperonin GroES, plays an essential role in assisting protein folding. The GroEL-GroES system forms a nano-cage that allows encapsulation of the non-native substrate proteins and provides a physical environment optimized to promote and accelerate protein folding. This Beutenbergia cavernae (strain ATCC BAA-8 / DSM 12333 / CCUG 43141 / JCM 11478 / NBRC 16432 / NCIMB 13614 / HKI 0122) protein is Chaperonin GroEL.